We begin with the raw amino-acid sequence, 181 residues long: Inner membrane-spanning protein YciB (181 aa).

5 helical membrane-spanning segments follow: residues 8–28 (FPIICFFVAYKFWGIYIATAA), 53–73 (ITLIFILLLGSFTLVFHNAIF), 76–96 (WKPTIVYWIFAIVLFGSHFFG), 121–141 (LSWALFFLILGVLNLFVVYNF), and 149–169 (FKLFGTLVLMLVFILGQAFYI).

Belongs to the YciB family.

It localises to the cell inner membrane. Plays a role in cell envelope biogenesis, maintenance of cell envelope integrity and membrane homeostasis. The sequence is that of Inner membrane-spanning protein YciB from Coxiella burnetii (strain CbuG_Q212) (Coxiella burnetii (strain Q212)).